The chain runs to 290 residues: Diaminopimelate epimerase (290 aa).

The substrate site is built by Asn17, Gln49, and Asn69. Cys78 serves as the catalytic Proton donor. Residues 79-80 (GN), Asn166, Asn199, and 217-218 (ER) contribute to the substrate site. Residue Cys226 is the Proton acceptor of the active site. Substrate is bound at residue 227–228 (GS).

It belongs to the diaminopimelate epimerase family. As to quaternary structure, homodimer.

The protein localises to the cytoplasm. It catalyses the reaction (2S,6S)-2,6-diaminopimelate = meso-2,6-diaminopimelate. The protein operates within amino-acid biosynthesis; L-lysine biosynthesis via DAP pathway; DL-2,6-diaminopimelate from LL-2,6-diaminopimelate: step 1/1. Its function is as follows. Catalyzes the stereoinversion of LL-2,6-diaminopimelate (L,L-DAP) to meso-diaminopimelate (meso-DAP), a precursor of L-lysine and an essential component of the bacterial peptidoglycan. The protein is Diaminopimelate epimerase of Nitrobacter hamburgensis (strain DSM 10229 / NCIMB 13809 / X14).